Consider the following 201-residue polypeptide: Probable molybdenum cofactor guanylyltransferase (201 aa).

GTP contacts are provided by residues 16–18, Lys-28, Asp-75, and Asp-107; that span reads LAG. Asp-107 is a Mg(2+) binding site.

This sequence belongs to the MobA family. Mg(2+) serves as cofactor.

It is found in the cytoplasm. The enzyme catalyses Mo-molybdopterin + GTP + H(+) = Mo-molybdopterin guanine dinucleotide + diphosphate. Transfers a GMP moiety from GTP to Mo-molybdopterin (Mo-MPT) cofactor (Moco or molybdenum cofactor) to form Mo-molybdopterin guanine dinucleotide (Mo-MGD) cofactor. This chain is Probable molybdenum cofactor guanylyltransferase, found in Mycobacterium bovis (strain ATCC BAA-935 / AF2122/97).